The sequence spans 235 residues: Demethylmenaquinone methyltransferase (235 aa).

Residues Thr-58, Asp-79, and 106–107 (NA) each bind S-adenosyl-L-methionine.

This sequence belongs to the class I-like SAM-binding methyltransferase superfamily. MenG/UbiE family.

The catalysed reaction is a 2-demethylmenaquinol + S-adenosyl-L-methionine = a menaquinol + S-adenosyl-L-homocysteine + H(+). Its pathway is quinol/quinone metabolism; menaquinone biosynthesis; menaquinol from 1,4-dihydroxy-2-naphthoate: step 2/2. In terms of biological role, methyltransferase required for the conversion of demethylmenaquinol (DMKH2) to menaquinol (MKH2). The polypeptide is Demethylmenaquinone methyltransferase (Shouchella clausii (strain KSM-K16) (Alkalihalobacillus clausii)).